The following is a 263-amino-acid chain: Phosphonates import ATP-binding protein PhnC 1 (263 aa).

Residues 3 to 248 (IQVENLWVAF…KEKELYFGEK (246 aa)) form the ABC transporter domain. 37-44 (GPSGAGKS) contacts ATP.

It belongs to the ABC transporter superfamily. Phosphonates importer (TC 3.A.1.9.1) family. The complex is composed of two ATP-binding proteins (PhnC), two transmembrane proteins (PhnE) and a solute-binding protein (PhnD).

Its subcellular location is the cell inner membrane. The catalysed reaction is phosphonate(out) + ATP + H2O = phosphonate(in) + ADP + phosphate + H(+). Functionally, part of the ABC transporter complex PhnCDE involved in phosphonates import. Responsible for energy coupling to the transport system. This chain is Phosphonates import ATP-binding protein PhnC 1, found in Synechococcus sp. (strain JA-2-3B'a(2-13)) (Cyanobacteria bacterium Yellowstone B-Prime).